Reading from the N-terminus, the 283-residue chain is SNAP25 homologous protein SNAP32 (283 aa).

Disordered regions lie at residues 1-64 (MSGR…AAAR) and 192-212 (LGLSDHPPQSNARQFHSEPTS). Over residues 198-212 (PPQSNARQFHSEPTS) the composition is skewed to polar residues. The t-SNARE coiled-coil homology domain maps to 218-280 (EMEKAKQDDG…KGANTRARRL (63 aa)).

The protein belongs to the SNAP-25 family. As to quaternary structure, interacts with SYP121. As to expression, expressed in roots, culms and leaves.

It localises to the membrane. Functionally, t-SNARE involved in diverse vesicle trafficking and membrane fusion processes. May be involved in resistance to the rice blast fungus Magnaporthe oryzae. May contribute to host resistance to rice blast through interaction with SYP121. The chain is SNAP25 homologous protein SNAP32 from Oryza sativa subsp. japonica (Rice).